The following is a 181-amino-acid chain: Probable nicotinate-nucleotide adenylyltransferase (181 aa).

This sequence belongs to the NadD family.

It carries out the reaction nicotinate beta-D-ribonucleotide + ATP + H(+) = deamido-NAD(+) + diphosphate. The protein operates within cofactor biosynthesis; NAD(+) biosynthesis; deamido-NAD(+) from nicotinate D-ribonucleotide: step 1/1. Its function is as follows. Catalyzes the reversible adenylation of nicotinate mononucleotide (NaMN) to nicotinic acid adenine dinucleotide (NaAD). This Campylobacter jejuni subsp. jejuni serotype O:6 (strain 81116 / NCTC 11828) protein is Probable nicotinate-nucleotide adenylyltransferase.